Consider the following 512-residue polypeptide: Glutathione-binding protein GsiB (512 aa).

An N-terminal signal peptide occupies residues 1–26; that stretch reads MTQFITHKWLAALGLASSIAAFPALA.

This sequence belongs to the bacterial solute-binding protein 5 family. The complex is composed of two ATP-binding proteins (GsiA), two transmembrane proteins (GsiC and GsiD) and a solute-binding protein (GsiB).

It localises to the periplasm. Functionally, part of the ABC transporter complex GsiABCD involved in glutathione import. Binds glutathione. In Salmonella typhimurium (strain LT2 / SGSC1412 / ATCC 700720), this protein is Glutathione-binding protein GsiB.